The sequence spans 498 residues: Protein flp (498 aa).

4 consecutive transmembrane segments (helical) span residues 6–26 (LYFL…IYIT), 389–409 (FNIV…FSAY), 433–453 (LTLC…YLIL), and 471–491 (LALI…LLFL).

The protein resides in the cell membrane. In terms of biological role, its precise function is unknown. Has no penicillin-binding activity and is not involved in methicillin resistance. The polypeptide is Protein flp (flp) (Staphylococcus aureus (strain Mu50 / ATCC 700699)).